We begin with the raw amino-acid sequence, 181 residues long: Protoporphyrinogen IX dehydrogenase [quinone] (181 aa).

The region spanning 3 to 172 is the Flavodoxin-like domain; the sequence is TLILFSTRDG…QVANFAREIA (170 aa). FMN is bound by residues 9-13 and 84-152; these read TRDGQ and FYSV…ETDT.

Belongs to the HemG family. FMN is required as a cofactor.

The protein localises to the cell inner membrane. It catalyses the reaction protoporphyrinogen IX + 3 a menaquinone = protoporphyrin IX + 3 a menaquinol. The catalysed reaction is protoporphyrinogen IX + 3 a ubiquinone = protoporphyrin IX + 3 a ubiquinol. The enzyme catalyses protoporphyrinogen IX + 3 a quinone = protoporphyrin IX + 3 a quinol. It functions in the pathway porphyrin-containing compound metabolism; protoporphyrin-IX biosynthesis; protoporphyrin-IX from protoporphyrinogen-IX: step 1/1. In terms of biological role, catalyzes the 6-electron oxidation of protoporphyrinogen IX to form protoporphyrin IX; under anaerobic conditions uses menaquinone as an electron acceptor, under aerobic condition uses ubiquinone as an electron acceptor. The chain is Protoporphyrinogen IX dehydrogenase [quinone] from Escherichia coli O157:H7.